Reading from the N-terminus, the 163-residue chain is PTS system fructose-specific EIIB component (163 aa).

The PTS EIIB type-4 domain maps to 1 to 163; sequence MMNIVLARID…FVQILRNVTK (163 aa). Catalysis depends on histidine 15, which acts as the Pros-phosphohistidine intermediate. Histidine 15 is modified (phosphohistidine; by EIIA).

It is found in the cytoplasm. It catalyses the reaction D-fructose(out) + N(pros)-phospho-L-histidyl-[protein] = D-fructose 1-phosphate(in) + L-histidyl-[protein]. Its function is as follows. The phosphoenolpyruvate-dependent sugar phosphotransferase system (sugar PTS), a major carbohydrate active -transport system, catalyzes the phosphorylation of incoming sugar substrates concomitantly with their translocation across the cell membrane. The enzyme II LevDE PTS system is involved in fructose transport. In terms of biological role, levD and LevE act as negative regulators of the levanase operon. They may be involved in a PTS-mediated phosphorylation of a regulator. The sequence is that of PTS system fructose-specific EIIB component from Bacillus subtilis (strain 168).